The primary structure comprises 253 residues: 5-oxoprolinase subunit A (253 aa).

The protein belongs to the LamB/PxpA family. As to quaternary structure, forms a complex composed of PxpA, PxpB and PxpC.

It carries out the reaction 5-oxo-L-proline + ATP + 2 H2O = L-glutamate + ADP + phosphate + H(+). Its function is as follows. Catalyzes the cleavage of 5-oxoproline to form L-glutamate coupled to the hydrolysis of ATP to ADP and inorganic phosphate. This chain is 5-oxoprolinase subunit A, found in Bacillus anthracis (strain A0248).